The primary structure comprises 138 residues: Acidic phospholipase A2 jerdoxin (138 aa).

The N-terminal stretch at 1–16 is a signal peptide; sequence MRTLWIMAVLLVGVEG. 7 disulfide bridges follow: cysteine 42/cysteine 131, cysteine 44/cysteine 60, cysteine 59/cysteine 111, cysteine 65/cysteine 138, cysteine 66/cysteine 104, cysteine 73/cysteine 97, and cysteine 91/cysteine 102. Positions 43, 45, and 47 each coordinate Ca(2+). The active site involves histidine 63. Aspartate 64 contributes to the Ca(2+) binding site. Aspartate 105 is a catalytic residue.

This sequence belongs to the phospholipase A2 family. Group II subfamily. D49 sub-subfamily. In terms of assembly, monomer. Ca(2+) serves as cofactor. Expressed by the venom gland.

The protein resides in the secreted. It catalyses the reaction a 1,2-diacyl-sn-glycero-3-phosphocholine + H2O = a 1-acyl-sn-glycero-3-phosphocholine + a fatty acid + H(+). Its function is as follows. Snake venom phospholipase A2 (PLA2) that displays edema-inducing activities, exhibits indirect hemolytic activity, and inhibits ADP-induced platelet aggregation. PLA2 catalyzes the calcium-dependent hydrolysis of the 2-acyl groups in 3-sn-phosphoglycerides. The protein is Acidic phospholipase A2 jerdoxin of Protobothrops jerdonii (Jerdon's pitviper).